An 811-amino-acid polypeptide reads, in one-letter code: Zinc finger protein 839 (811 aa).

The C2H2-type zinc finger occupies 197-222 (FKCQTCEKSYIGKGGLARHFKLNPGH). 3 disordered regions span residues 329 to 349 (QRRAAQLPGGPAAAGEQRASP), 455 to 555 (PDNL…NGSV), and 612 to 654 (ALEH…AEAG). The segment covering 476-485 (SSEKREREAA) has biased composition (basic and acidic residues). The span at 501-510 (SNDTTESLAA) shows a compositional bias: polar residues.

The chain is Zinc finger protein 839 (ZNF839) from Homo sapiens (Human).